The sequence spans 228 residues: Ribosomal RNA small subunit methyltransferase G (228 aa).

S-adenosyl-L-methionine is bound by residues glycine 70, leucine 75, 120–121 (AE), and arginine 138. The segment at 207–228 (RRGDTRGPNRRVSPRRTGGAPA) is disordered.

Belongs to the methyltransferase superfamily. RNA methyltransferase RsmG family.

The protein localises to the cytoplasm. Functionally, specifically methylates the N7 position of guanine in position 518 of 16S rRNA. The chain is Ribosomal RNA small subunit methyltransferase G from Mycobacterium marinum (strain ATCC BAA-535 / M).